A 260-amino-acid polypeptide reads, in one-letter code: Thiazole synthase (260 aa).

Lys-102 acts as the Schiff-base intermediate with DXP in catalysis. 1-deoxy-D-xylulose 5-phosphate contacts are provided by residues Gly-163, 189–190, and 211–212; these read AG and NT.

This sequence belongs to the ThiG family. As to quaternary structure, homotetramer. Forms heterodimers with either ThiH or ThiS.

The protein localises to the cytoplasm. The enzyme catalyses [ThiS sulfur-carrier protein]-C-terminal-Gly-aminoethanethioate + 2-iminoacetate + 1-deoxy-D-xylulose 5-phosphate = [ThiS sulfur-carrier protein]-C-terminal Gly-Gly + 2-[(2R,5Z)-2-carboxy-4-methylthiazol-5(2H)-ylidene]ethyl phosphate + 2 H2O + H(+). It functions in the pathway cofactor biosynthesis; thiamine diphosphate biosynthesis. Functionally, catalyzes the rearrangement of 1-deoxy-D-xylulose 5-phosphate (DXP) to produce the thiazole phosphate moiety of thiamine. Sulfur is provided by the thiocarboxylate moiety of the carrier protein ThiS. In vitro, sulfur can be provided by H(2)S. In Citrifermentans bemidjiense (strain ATCC BAA-1014 / DSM 16622 / JCM 12645 / Bem) (Geobacter bemidjiensis), this protein is Thiazole synthase.